Here is a 180-residue protein sequence, read N- to C-terminus: Large ribosomal subunit protein uL6 (180 aa).

The protein belongs to the universal ribosomal protein uL6 family. As to quaternary structure, part of the 50S ribosomal subunit.

This protein binds to the 23S rRNA, and is important in its secondary structure. It is located near the subunit interface in the base of the L7/L12 stalk, and near the tRNA binding site of the peptidyltransferase center. In Anaeromyxobacter sp. (strain K), this protein is Large ribosomal subunit protein uL6.